The primary structure comprises 462 residues: MESTPSRGLNRVHLQCRNLQEFLGGLSPGVLDRLYGHPATCLAVFRELPSLAKNWVMRMLFLEQPLPQAAVALWVKKEFSKAQEESTGLLSGLRIWHTQLLPGGLQGLILNPIFRQNLRIALLGGGKAWSDDTSQLGPDKHARDVPSLDKYAEERWEVVLHFMVGSPSAAVSQDLAQLLSQAGLMKSTEPGEPPCITSAGFQFLLLDTPAQLWYFMLQYLQTAQSRGMDLVEILSFLFQLSFSTLGKDYSVEGMSDSLLNFLQHLREFGLVFQRKRKSRRYYPTRLAINLSSGVSGAGGTVHQPGFIVVETNYRLYAYTESELQIALIALFSEMLYRFPNMVVAQVTRESVQQAIASGITAQQIIHFLRTRAHPVMLKQTPVLPPTITDQIRLWELERDRLRFTEGVLYNQFLSQVDFELLLAHARELGVLVFENSAKRLMVVTPAGHSDVKRFWKRQKHSS.

Belongs to the TFB2 family. As to quaternary structure, component of the 7-subunit TFIIH core complex composed of XPB/ERCC3, XPD/ERCC2, GTF2H1, GTF2H2, GTF2H3, GTF2H4 and GTF2H5, which is active in NER. The core complex associates with the 3-subunit CDK-activating kinase (CAK) module composed of CCNH/cyclin H, CDK7 and MNAT1 to form the 10-subunit holoenzyme (holo-TFIIH) active in transcription. Part of TBP-based Pol II pre-initiation complex (PIC), in which Pol II core assembles with general transcription factors and other specific initiation factors including GTF2E1, GTF2E2, GTF2F1, GTF2F2, TCEA1, ERCC2, ERCC3, GTF2H2, GTF2H3, GTF2H4, GTF2H5, GTF2A1, GTF2A2, GTF2B and TBP; this large multi-subunit PIC complex mediates DNA unwinding and targets Pol II core to the transcription start site where the first phosphodiester bond forms.

The protein resides in the nucleus. Component of the general transcription and DNA repair factor IIH (TFIIH) core complex, which is involved in general and transcription-coupled nucleotide excision repair (NER) of damaged DNA and, when complexed to CAK, in RNA transcription by RNA polymerase II. In NER, TFIIH acts by opening DNA around the lesion to allow the excision of the damaged oligonucleotide and its replacement by a new DNA fragment. In transcription, TFIIH has an essential role in transcription initiation. When the pre-initiation complex (PIC) has been established, TFIIH is required for promoter opening and promoter escape. Phosphorylation of the C-terminal tail (CTD) of the largest subunit of RNA polymerase II by the kinase module CAK controls the initiation of transcription. Its function is as follows. Stimulates the ATPase activity of TFIIH subunit XPB/ERCC3. The chain is General transcription factor IIH subunit 4 (GTF2H4) from Homo sapiens (Human).